We begin with the raw amino-acid sequence, 135 residues long: Mediator of RNA polymerase II transcription subunit 10 (135 aa).

Belongs to the Mediator complex subunit 10 family. Component of the Mediator complex, which is composed of MED1, MED4, MED6, MED7, MED8, MED9, MED10, MED11, MED12, MED13, MED13L, MED14, MED15, MED16, MED17, MED18, MED19, MED20, MED21, MED22, MED23, MED24, MED25, MED26, MED27, MED29, MED30, MED31, CCNC, CDK8 and CDC2L6/CDK11. The MED12, MED13, CCNC and CDK8 subunits form a distinct module termed the CDK8 module. Mediator containing the CDK8 module is less active than Mediator lacking this module in supporting transcriptional activation. Individual preparations of the Mediator complex lacking one or more distinct subunits have been variously termed ARC, CRSP, DRIP, PC2, SMCC and TRAP.

The protein localises to the nucleus. Component of the Mediator complex, a coactivator involved in the regulated transcription of nearly all RNA polymerase II-dependent genes. Mediator functions as a bridge to convey information from gene-specific regulatory proteins to the basal RNA polymerase II transcription machinery. Mediator is recruited to promoters by direct interactions with regulatory proteins and serves as a scaffold for the assembly of a functional preinitiation complex with RNA polymerase II and the general transcription factors. This is Mediator of RNA polymerase II transcription subunit 10 (Med10) from Mus musculus (Mouse).